Here is a 260-residue protein sequence, read N- to C-terminus: 3-alpha-(or 20-beta)-hydroxysteroid dehydrogenase (260 aa).

NAD(+)-binding residues include arginine 17, methionine 19, aspartate 38, aspartate 61, valine 62, asparagine 88, tyrosine 153, lysine 157, valine 186, threonine 188, and threonine 191. Tyrosine 153 serves as the catalytic Proton acceptor.

This sequence belongs to the short-chain dehydrogenases/reductases (SDR) family. As to quaternary structure, homotetramer.

It carries out the reaction androstan-3alpha,17beta-diol + NAD(+) = 17beta-hydroxyandrostanone + NADH + H(+). It functions in the pathway lipid metabolism; steroid degradation. Functionally, probably involved in steroid metabolism. In Mycobacterium tuberculosis (strain CDC 1551 / Oshkosh), this protein is 3-alpha-(or 20-beta)-hydroxysteroid dehydrogenase (fabG3).